A 552-amino-acid chain; its full sequence is uncharacterized protein (552 aa).

In terms of domain architecture, DhaL spans 8-200 (KLFADMIIQG…LLCVYEGFLK (193 aa)).

This is an uncharacterized protein from Staphylococcus epidermidis (strain ATCC 35984 / DSM 28319 / BCRC 17069 / CCUG 31568 / BM 3577 / RP62A).